A 476-amino-acid chain; its full sequence is Cysteine--tRNA ligase (476 aa).

C36 contributes to the Zn(2+) binding site. Positions 38–48 (PTVYDYAHIGN) match the 'HIGH' region motif. Positions 221, 246, and 250 each coordinate Zn(2+). The 'KMSKS' region motif lies at 278 to 282 (KMSKS). K281 is an ATP binding site.

The protein belongs to the class-I aminoacyl-tRNA synthetase family. As to quaternary structure, monomer. Zn(2+) is required as a cofactor.

It localises to the cytoplasm. The enzyme catalyses tRNA(Cys) + L-cysteine + ATP = L-cysteinyl-tRNA(Cys) + AMP + diphosphate. The sequence is that of Cysteine--tRNA ligase from Chlamydia caviae (strain ATCC VR-813 / DSM 19441 / 03DC25 / GPIC) (Chlamydophila caviae).